The following is a 1002-amino-acid chain: UPF0182 protein alr1037 (1002 aa).

Transmembrane regions (helical) follow at residues 7–29 (FRLS…LGAE), 49–71 (RGVL…LALA), 123–145 (LRWL…VHYG), 178–200 (QVFS…LIYS), 202–224 (FFLR…YNWA), 258–280 (LLEL…TYLL), 300–319 (HLYG…YWLS), 339–361 (VVVQ…FYLL), and 382–404 (GAYL…YLIV).

It belongs to the UPF0182 family.

The protein resides in the cell membrane. The polypeptide is UPF0182 protein alr1037 (Nostoc sp. (strain PCC 7120 / SAG 25.82 / UTEX 2576)).